The sequence spans 259 residues: MNKPVLVSFLVSGDPNADATLKFMKALDKYSGVIELGIPFSDPVADGATIQAADVRALSNGFKIAKSFEILKEFRKESNTPVILMTYYNPVYNRGIENFVTQAKEAGANGLIIVDLPLQEATEYRKICKKHEMGTVFLSAPNTPEERLKMSDEASTEFLYLISTFGITGARESFEQMTFDFIKRARKTCKGKICVGFGISKGTHAESLIEQGADGVIVGSAFVDIIKTYGDSNEAITKLEELAKELHNGIEKGFEKRNK.

Catalysis depends on proton acceptor residues glutamate 35 and aspartate 46.

Belongs to the TrpA family. In terms of assembly, tetramer of two alpha and two beta chains.

It catalyses the reaction (1S,2R)-1-C-(indol-3-yl)glycerol 3-phosphate + L-serine = D-glyceraldehyde 3-phosphate + L-tryptophan + H2O. It participates in amino-acid biosynthesis; L-tryptophan biosynthesis; L-tryptophan from chorismate: step 5/5. Its function is as follows. The alpha subunit is responsible for the aldol cleavage of indoleglycerol phosphate to indole and glyceraldehyde 3-phosphate. The polypeptide is Tryptophan synthase alpha chain (Methanococcus vannielii (strain ATCC 35089 / DSM 1224 / JCM 13029 / OCM 148 / SB)).